The chain runs to 163 residues: Beta-lactoglobulin-2 (163 aa).

2 disulfides stabilise this stretch: Cys66/Cys161 and Cys106/Cys120.

Belongs to the calycin superfamily. Lipocalin family. Monomer.

It localises to the secreted. Its function is as follows. Lactoglobulin is the primary component of whey, it binds retinol and is probably involved in the transport of that molecule. This chain is Beta-lactoglobulin-2 (LGB2), found in Equus asinus (Donkey).